A 383-amino-acid chain; its full sequence is BRISC and BRCA1-A complex member 2 (383 aa).

M1 is modified (N-acetylmethionine). S2 bears the Phosphoserine mark. UEV-like stretches follow at residues 30–147 (DATN…TLLE) and 275–364 (IAAF…RAKA).

The protein belongs to the BABAM2 family. In terms of assembly, component of the ARISC complex, at least composed of UIMC1/RAP80, ABRAXAS1, BRCC3/BRCC36, BABAM2 and BABAM1/NBA1. Component of the BRCA1-A complex, at least composed of BRCA1, BARD1, UIMC1/RAP80, ABRAXAS1, BRCC3/BRCC36, BABAM2 and BABAM1/NBA1. In the BRCA1-A complex, interacts directly with ABRAXAS1, BRCC3/BRCC36 and BABAM1/NBA1. Binds polyubiquitin. Component of the BRISC complex, at least composed of ABRAXAS2, BRCC3/BRCC36, BABAM2 and BABAM1/NBA1. Identified in a complex with SHMT2 and the other subunits of the BRISC complex. Component of the BRCA1/BRCA2 containing complex (BRCC), which also contains BRCA1, BRCA2, BARD1, BRCC3/BRCC36 and RAD51. BRCC is a ubiquitin E3 ligase complex that enhances cellular survival following DNA damage. May interact with FAS and TNFRSF1A.

The protein resides in the cytoplasm. The protein localises to the nucleus. Its function is as follows. Component of the BRCA1-A complex, a complex that specifically recognizes 'Lys-63'-linked ubiquitinated histones H2A and H2AX at DNA lesions sites, leading to target the BRCA1-BARD1 heterodimer to sites of DNA damage at double-strand breaks (DSBs). The BRCA1-A complex also possesses deubiquitinase activity that specifically removes 'Lys-63'-linked ubiquitin on histones H2A and H2AX. In the BRCA1-A complex, it acts as an adapter that bridges the interaction between BABAM1/NBA1 and the rest of the complex, thereby being required for the complex integrity and modulating the E3 ubiquitin ligase activity of the BRCA1-BARD1 heterodimer. Component of the BRISC complex, a multiprotein complex that specifically cleaves 'Lys-63'-linked ubiquitin in various substrates. Within the BRISC complex, acts as an adapter that bridges the interaction between BABAM1/NBA1 and the rest of the complex, thereby being required for the complex integrity. The BRISC complex is required for normal mitotic spindle assembly and microtubule attachment to kinetochores via its role in deubiquitinating NUMA1. The BRISC complex plays a role in interferon signaling via its role in the deubiquitination of the interferon receptor IFNAR1; deubiquitination increases IFNAR1 activity by enhancing its stability and cell surface expression. Down-regulates the response to bacterial lipopolysaccharide (LPS) via its role in IFNAR1 deubiquitination. May play a role in homeostasis or cellular differentiation in cells of neural, epithelial and germline origins. May also act as a death receptor-associated anti-apoptotic protein, which inhibits the mitochondrial apoptotic pathway. May regulate TNF-alpha signaling through its interactions with TNFRSF1A; however these effects may be indirect. This Rattus norvegicus (Rat) protein is BRISC and BRCA1-A complex member 2.